We begin with the raw amino-acid sequence, 473 residues long: Photosystem II CP43 reaction center protein (473 aa).

A propeptide spanning residues M1–E14 is cleaved from the precursor. Residue T15 is modified to N-acetylthreonine. T15 carries the post-translational modification Phosphothreonine. 5 consecutive transmembrane segments (helical) span residues L69–A93, L134–N155, K178–T200, K255–S275, and W291–A312. E367 contributes to the [CaMn4O5] cluster binding site. A helical membrane pass occupies residues R447–P471.

Belongs to the PsbB/PsbC family. PsbC subfamily. PSII is composed of 1 copy each of membrane proteins PsbA, PsbB, PsbC, PsbD, PsbE, PsbF, PsbH, PsbI, PsbJ, PsbK, PsbL, PsbM, PsbT, PsbX, PsbY, PsbZ, Psb30/Ycf12, at least 3 peripheral proteins of the oxygen-evolving complex and a large number of cofactors. It forms dimeric complexes. Requires Binds multiple chlorophylls and provides some of the ligands for the Ca-4Mn-5O cluster of the oxygen-evolving complex. It may also provide a ligand for a Cl- that is required for oxygen evolution. PSII binds additional chlorophylls, carotenoids and specific lipids. as cofactor.

The protein localises to the plastid. Its subcellular location is the chloroplast thylakoid membrane. In terms of biological role, one of the components of the core complex of photosystem II (PSII). It binds chlorophyll and helps catalyze the primary light-induced photochemical processes of PSII. PSII is a light-driven water:plastoquinone oxidoreductase, using light energy to abstract electrons from H(2)O, generating O(2) and a proton gradient subsequently used for ATP formation. In Cicer arietinum (Chickpea), this protein is Photosystem II CP43 reaction center protein.